The following is a 476-amino-acid chain: Ribulose bisphosphate carboxylase large chain (476 aa).

A propeptide spanning residues 1-2 (MS) is cleaved from the precursor. Proline 3 bears the N-acetylproline mark. Lysine 14 is modified (N6,N6,N6-trimethyllysine). Residues asparagine 123 and threonine 173 each contribute to the substrate site. The active-site Proton acceptor is lysine 175. Residue lysine 177 coordinates substrate. The Mg(2+) site is built by lysine 201, aspartate 203, and glutamate 204. Lysine 201 is modified (N6-carboxylysine). The active-site Proton acceptor is the histidine 294. Substrate contacts are provided by arginine 295, histidine 327, and serine 379.

Belongs to the RuBisCO large chain family. Type I subfamily. In terms of assembly, heterohexadecamer of 8 large chains and 8 small chains; disulfide-linked. The disulfide link is formed within the large subunit homodimers. It depends on Mg(2+) as a cofactor. Post-translationally, the disulfide bond which can form in the large chain dimeric partners within the hexadecamer appears to be associated with oxidative stress and protein turnover.

Its subcellular location is the plastid. It is found in the chloroplast. The enzyme catalyses 2 (2R)-3-phosphoglycerate + 2 H(+) = D-ribulose 1,5-bisphosphate + CO2 + H2O. It carries out the reaction D-ribulose 1,5-bisphosphate + O2 = 2-phosphoglycolate + (2R)-3-phosphoglycerate + 2 H(+). In terms of biological role, ruBisCO catalyzes two reactions: the carboxylation of D-ribulose 1,5-bisphosphate, the primary event in carbon dioxide fixation, as well as the oxidative fragmentation of the pentose substrate in the photorespiration process. Both reactions occur simultaneously and in competition at the same active site. This is Ribulose bisphosphate carboxylase large chain from Sorghum bicolor (Sorghum).